The primary structure comprises 320 residues: Aspartate carbamoyltransferase catalytic subunit (320 aa).

Arg-58 and Thr-59 together coordinate carbamoyl phosphate. Position 86 (Lys-86) interacts with L-aspartate. The carbamoyl phosphate site is built by Arg-108, His-136, and Gln-139. Positions 169 and 223 each coordinate L-aspartate. Positions 264 and 265 each coordinate carbamoyl phosphate.

The protein belongs to the aspartate/ornithine carbamoyltransferase superfamily. ATCase family. In terms of assembly, heterododecamer (2C3:3R2) of six catalytic PyrB chains organized as two trimers (C3), and six regulatory PyrI chains organized as three dimers (R2).

The enzyme catalyses carbamoyl phosphate + L-aspartate = N-carbamoyl-L-aspartate + phosphate + H(+). It participates in pyrimidine metabolism; UMP biosynthesis via de novo pathway; (S)-dihydroorotate from bicarbonate: step 2/3. Catalyzes the condensation of carbamoyl phosphate and aspartate to form carbamoyl aspartate and inorganic phosphate, the committed step in the de novo pyrimidine nucleotide biosynthesis pathway. The sequence is that of Aspartate carbamoyltransferase catalytic subunit from Cereibacter sphaeroides (strain ATCC 17029 / ATH 2.4.9) (Rhodobacter sphaeroides).